A 435-amino-acid polypeptide reads, in one-letter code: Cell adhesion molecule 2 (435 aa).

A signal peptide spans 1 to 24; the sequence is MIWKRSAVLRFYSVCGLLLQGSQG. At 25–367 the chain is on the extracellular side; the sequence is QFPLTQNVTV…SLAGQNGPDH (343 aa). In terms of domain architecture, Ig-like V-type spans 27–119; it reads PLTQNVTVVE…PVKTSKAYLT (93 aa). N-linked (GlcNAc...) asparagine glycans are attached at residues asparagine 31 and asparagine 51. Disulfide bonds link cysteine 44/cysteine 104, cysteine 146/cysteine 203, and cysteine 248/cysteine 296. Ig-like C2-type domains are found at residues 127–219 and 227–312; these read PQIS…VAMQ and PSVK…YVLI. A glycan (N-linked (GlcNAc...) asparagine) is linked at asparagine 291. The segment covering 337-351 has biased composition (low complexity); the sequence is SVTITTSPSTSASSS. The disordered stretch occupies residues 337 to 360; sequence SVTITTSPSTSASSSSRRDPNSLA. The chain crosses the membrane as a helical span at residues 368 to 388; the sequence is ALIGGIVAVVVFVTLCSIFLL. Residues 389 to 435 are Cytoplasmic-facing; sequence GRYLARHKGTYLTNEAKGAEDAPDADTAIINAEGSQVNAEEKKEYFI. Serine 423 carries the post-translational modification Phosphoserine.

The protein belongs to the nectin family. Glycosylation at Asn-51 reduces adhesive binding.

It localises to the cell membrane. The protein resides in the synapse. The protein localises to the cell projection. Its subcellular location is the axon. Adhesion molecule that engages in homo- and heterophilic interactions with the other nectin-like family members, leading to cell aggregation. Important for synapse organization, providing regulated trans-synaptic adhesion. Preferentially binds to oligodendrocytes. The sequence is that of Cell adhesion molecule 2 (Cadm2) from Mus musculus (Mouse).